The sequence spans 297 residues: UTP--glucose-1-phosphate uridylyltransferase (297 aa).

This sequence belongs to the UDPGP type 2 family.

The enzyme catalyses alpha-D-glucose 1-phosphate + UTP + H(+) = UDP-alpha-D-glucose + diphosphate. It participates in carbohydrate metabolism; nucleotide-sugar metabolism. Its pathway is bacterial outer membrane biogenesis; lipopolysaccharide biosynthesis. The chain is UTP--glucose-1-phosphate uridylyltransferase (galF) from Escherichia coli O157:H7.